The primary structure comprises 159 residues: uncharacterized protein (159 aa).

Belongs to the SufE family.

This is an uncharacterized protein from Synechocystis sp. (strain ATCC 27184 / PCC 6803 / Kazusa).